Here is a 217-residue protein sequence, read N- to C-terminus: Small ribosomal subunit protein eS6 (217 aa).

This sequence belongs to the eukaryotic ribosomal protein eS6 family.

This is Small ribosomal subunit protein eS6 from Hyperthermus butylicus (strain DSM 5456 / JCM 9403 / PLM1-5).